Reading from the N-terminus, the 445-residue chain is Probable histidine--tRNA ligase, cytoplasmic (445 aa).

Belongs to the class-II aminoacyl-tRNA synthetase family.

The protein localises to the cytoplasm. It carries out the reaction tRNA(His) + L-histidine + ATP = L-histidyl-tRNA(His) + AMP + diphosphate + H(+). The protein is Probable histidine--tRNA ligase, cytoplasmic of Antonospora locustae (Microsporidian parasite).